A 166-amino-acid chain; its full sequence is Putative 4-hydroxy-4-methyl-2-oxoglutarate aldolase 2 (166 aa).

Residue Ala-2 is modified to N-acetylalanine. Substrate-binding positions include 81–84 (GGNP) and Arg-103. Asp-104 is an a divalent metal cation binding site.

It belongs to the class II aldolase/RraA-like family. Homotrimer. A divalent metal cation serves as cofactor.

The catalysed reaction is 4-hydroxy-4-methyl-2-oxoglutarate = 2 pyruvate. The enzyme catalyses oxaloacetate + H(+) = pyruvate + CO2. In terms of biological role, catalyzes the aldol cleavage of 4-hydroxy-4-methyl-2-oxoglutarate (HMG) into 2 molecules of pyruvate. Also contains a secondary oxaloacetate (OAA) decarboxylase activity due to the common pyruvate enolate transition state formed following C-C bond cleavage in the retro-aldol and decarboxylation reactions. This chain is Putative 4-hydroxy-4-methyl-2-oxoglutarate aldolase 2, found in Arabidopsis thaliana (Mouse-ear cress).